The primary structure comprises 215 residues: Adenylate kinase (215 aa).

10–15 contributes to the ATP binding site; that stretch reads GAGKGT. The interval 30–59 is NMP; the sequence is STGDIFRANISGKTELGMKAKGYMDKGLLV. Residues T31, R36, 57-59, 85-88, and Q92 contribute to the AMP site; these read LLV and GFPR. The tract at residues 126 to 163 is LID; that stretch reads GRRVCSKCGASYHIEYNPTKVEGICDLCGSPVVQRKDD. R127 is an ATP binding site. Zn(2+)-binding residues include C130 and C133. Residue 136–137 participates in ATP binding; that stretch reads SY. 2 residues coordinate Zn(2+): C150 and C153. Residues R160 and R171 each contribute to the AMP site. Q199 contributes to the ATP binding site.

The protein belongs to the adenylate kinase family. In terms of assembly, monomer.

Its subcellular location is the cytoplasm. It carries out the reaction AMP + ATP = 2 ADP. The protein operates within purine metabolism; AMP biosynthesis via salvage pathway; AMP from ADP: step 1/1. Functionally, catalyzes the reversible transfer of the terminal phosphate group between ATP and AMP. Plays an important role in cellular energy homeostasis and in adenine nucleotide metabolism. This Clostridium acetobutylicum (strain ATCC 824 / DSM 792 / JCM 1419 / IAM 19013 / LMG 5710 / NBRC 13948 / NRRL B-527 / VKM B-1787 / 2291 / W) protein is Adenylate kinase.